The primary structure comprises 473 residues: Photosystem II CP43 reaction center protein (473 aa).

The propeptide occupies 1–14; sequence MKTLYSLRRFYHVE. An N-acetylthreonine modification is found at Thr-15. Position 15 is a phosphothreonine (Thr-15). 5 helical membrane passes run 69–93, 134–155, 178–200, 255–275, and 291–312; these read LFEV…PHLA, LLGP…KDRN, KALY…RKIT, KPFA…LSYS, and WFNN…ASQA. Glu-367 provides a ligand contact to [CaMn4O5] cluster. A helical membrane pass occupies residues 447-471; sequence RARAAAAGFEKGIDRDFEPVLSMTP.

The protein belongs to the PsbB/PsbC family. PsbC subfamily. As to quaternary structure, PSII is composed of 1 copy each of membrane proteins PsbA, PsbB, PsbC, PsbD, PsbE, PsbF, PsbH, PsbI, PsbJ, PsbK, PsbL, PsbM, PsbT, PsbX, PsbY, PsbZ, Psb30/Ycf12, at least 3 peripheral proteins of the oxygen-evolving complex and a large number of cofactors. It forms dimeric complexes. Binds multiple chlorophylls and provides some of the ligands for the Ca-4Mn-5O cluster of the oxygen-evolving complex. It may also provide a ligand for a Cl- that is required for oxygen evolution. PSII binds additional chlorophylls, carotenoids and specific lipids. serves as cofactor.

It localises to the plastid. The protein localises to the chloroplast thylakoid membrane. Functionally, one of the components of the core complex of photosystem II (PSII). It binds chlorophyll and helps catalyze the primary light-induced photochemical processes of PSII. PSII is a light-driven water:plastoquinone oxidoreductase, using light energy to abstract electrons from H(2)O, generating O(2) and a proton gradient subsequently used for ATP formation. This Atropa belladonna (Belladonna) protein is Photosystem II CP43 reaction center protein.